The primary structure comprises 185 residues: Ribosome-recycling factor (185 aa).

This sequence belongs to the RRF family.

It is found in the cytoplasm. In terms of biological role, responsible for the release of ribosomes from messenger RNA at the termination of protein biosynthesis. May increase the efficiency of translation by recycling ribosomes from one round of translation to another. The chain is Ribosome-recycling factor from Pseudomonas paraeruginosa (strain DSM 24068 / PA7) (Pseudomonas aeruginosa (strain PA7)).